The following is a 421-amino-acid chain: Gamma-glutamyl phosphate reductase (421 aa).

Belongs to the gamma-glutamyl phosphate reductase family.

It localises to the cytoplasm. It carries out the reaction L-glutamate 5-semialdehyde + phosphate + NADP(+) = L-glutamyl 5-phosphate + NADPH + H(+). It functions in the pathway amino-acid biosynthesis; L-proline biosynthesis; L-glutamate 5-semialdehyde from L-glutamate: step 2/2. In terms of biological role, catalyzes the NADPH-dependent reduction of L-glutamate 5-phosphate into L-glutamate 5-semialdehyde and phosphate. The product spontaneously undergoes cyclization to form 1-pyrroline-5-carboxylate. This is Gamma-glutamyl phosphate reductase from Acinetobacter baumannii (strain ATCC 17978 / DSM 105126 / CIP 53.77 / LMG 1025 / NCDC KC755 / 5377).